Consider the following 463-residue polypeptide: Quinolone resistance protein NorB (463 aa).

Transmembrane regions (helical) follow at residues 17–37 (IGIV…VNVV), 53–73 (IAVS…GGLA), 86–106 (IILN…LLLI), 107–127 (IGRL…LSII), 142–162 (YWSI…GAVA), 165–185 (LGWR…LFLI), 201–221 (FDIK…ILIT), 230–250 (SLLF…FIVL), 273–293 (TASN…NTFV), 299–319 (YSSL…LIMI), 334–354 (PMLI…LTFL), 357–377 (ILYV…LGIY), 403–423 (MASA…YAIV), and 435–455 (IALW…LLLV).

Belongs to the major facilitator superfamily. TCR/Tet family.

Its subcellular location is the cell membrane. Functionally, multidrug efflux pump that acts independently of NorA and is one of the factors that confers resistance against diverse quinolones and chemical compounds. The chain is Quinolone resistance protein NorB (norB) from Staphylococcus aureus (strain MSSA476).